The primary structure comprises 2335 residues: MKKRKRRTFKRFIAAFLVLSLMISLLPADVLAKTTEEEAGNRIVSDDPEETPRNEQTEEAVPFPSKDINKEGEITSERTENTKLYYEGDGVYKQEVYLDPIHTKETPNADWEDISPELKESTSKQVETENAILNSDFQKQMKNGLYATFEHNDHKVTYSLVEAKGPNKTSLTPKDTSADYKTDSNEIVYPDVFPNIDLQTFTFNENIKEDLVLHQYDGYNTFTFQVKTDLQAKEQEDGSIDFSDEKGKVVFSVPKPFMTDSKLDELSGEVERSDKVSYKLEKNEEGYLLHLTADENWLKDPERVYPVSIDPSTSLSVSSDTFVMSAYPTTNYSASSQKWDANLKSYVLKTGYYDKTTGTNYAFMKFNNLKPIQNMAVTKATLKTYVAHSYYGTKATGLWLDTVNSNYDNGKVTWNTKPASKNIGKAEVHKGQWASYDVTAAVKSWNSGGANYGFKLHTNGNGKEYWKKLISSANSANKPYIEVTYTIPKGNTPSIKAYHNGDSTGYFDISWKKVEGAKGYKVWIYNGKEYQAISAGNVTSWSTKGKKIWPTSAEIASKRYKLHVDGKDGAELALDPSPVYKNSGGSYATSKNYWIGVSAIFDQGEGAMSAPAKPVIPNVGKAQAPSTKGYNNGNATGYFDLSWKAVSGATGYKVQVFNGKGFETLDLGNQTSWTTKGKKIWPTSAEIKAGKYALHLKDGNGAELPINPGPTYKNAGGDGAKKNYSFKIIAYNKDGEAIASPAANPTLPDIAKPKNLTGYLYTNTKSSQTGYVNLIWEKVQNAKGYKVNIYNGKEYQSYDVGDVDHWTTQNKNIWPTPEEIKAGSYKLHTDGKGRELALDPSPVYNNANGNYKGKKNYSFTLSAYNANGETIPTAPFNPTFHEGAEFLGTEEYWSIIDIPSGQLNGATGNVIVNEEDLSIDGRGPGLGLSRTYNSLDTSDHLFGQGWYADAETSVISTDGGAMYIDEDATTHRFTKKADGTYQPPTGVYLELTETADQFILKTKDQTNAYFNKKGGKLQKVVDGHNNATVYTYNDKNQLTAITDASGRKLTFTYDENGHVTSITGPKNKKVTYSYESDLLKKVTDTDGTVTSFDYDAEGRLVKQYSANSTEAKPVFTEYQYSGHRLEKAINAKKETYVYSYDADKKTLLMTQPNGRKVQYGYNEAGNPIQVIDDAEGLKITTNTKYEGNNVVEDVDPNDVGTGKATESYQYDKDGNVTSVKDAYGTETYEYNKNNDVTKMKDTEGNVTDIAYDGLDAVSETDQSGKSSSAAVYDKYGNQIQSSKDLSASTNILKDGSFEAQKSGWNLTASKDSGKISVIADKSGVLSGSKALEVLSQSTSAGTDHGYSSATQTVELEPNTTYTLSGKIKTDLAKSRAYFNIDLRDKDQKRIQWIHNEYSALAGKNDWTKRQITFTTPANAGKAVVYMEVDHRDKDGKGKAWFGEVQLEKGEVSSSYNPVQNSSFTAATENWSVSGASVDSEEGFNDDVSLKAARTSASQAGSVTKQTVVLGQNANDKPVYLTLTGMSKASSVKFTDEKDYSLQANVTYADGSTGVYNAKFPSGTQEWNRAAVVIPKTKPINKVDISILFQKSATGTVWFDDIRLIEGSLLTKSTYDSNGNYVTKEEDELGFSTSTDYDETGKKTAETDAKGEKTTYTYDQADQLTNMTLSNGTSILHSYDKEGNEVSKTIRAGADQTYKYEYDVMGKLVKTTDPLGNVLASEYDANSNLTKTISPNGNEVSLSYDGTDRVKSKSYNGTEKYNFTYDKNGNETSVVNKEQNTTKKRTFDNKNRLTELTDRGGSQTWTYPSDSDKLKTFSWSHGDQKGTNQFTYNKLDQMIEMKDSTSSYSFDYDENGNVQTFITGNGGGTSFSYDERNLVSSLHIGDKNGGSILTESYEYDANGNRTTINSSASGKVQYEYGKLNQLVKETHEDGTVIEYTYDGFGNRKTVTTVKDGSSKTVNASFNIMNQLTKVNDESISYDKNGNRTSDGKFTYTWDAEDNLTAVTKKGEDKPFATYKYDEKGNRIQKTVNGNVTNYFYDGDSLNVLYETDADNKVTKSYTYGDSGQLLSYTENGKKYFYHYNAHGDVIAISDSSGKTLAKYQYDAWGNPTKTEASDEVKDNRYRYAGYQYDEETGLYYLMARYYEPRNGVFLSLDPDPGSDGDSLDQNGYAYGNNNPVMNVDPDGHWVWLVVNAGFAAYDGYKAYKSGKGWKGAAWAAASNFGPGKIFKGAKRVYRFAKSGKNFNWKHIKKDHGPKSKARMPNGQPKSKFRSAKTLRRTTKATARTRPAYVQKDGRTVHFKKFKKPIGRKTNGRHTYTVKVVKSGRYVVTSYPY.

The N-terminal stretch at 1-32 (MKKRKRRTFKRFIAAFLVLSLMISLLPADVLA) is a signal peptide. The disordered stretch occupies residues 36-81 (EEEAGNRIVSDDPEETPRNEQTEEAVPFPSKDINKEGEITSERTEN). Basic and acidic residues predominate over residues 67–81 (DINKEGEITSERTEN). YD repeat units follow at residues 1032-1065 (YNDKNQLTAITDASGRKLTFTYDENGHVTSITGP), 1076-1103 (SDLLKKVTDTDGTVTSFDYDAEGRLVKQ), 1678-1716 (YDKEGNEVSKTIRAGADQTYKYEYDVMGKLVKTTDPLGN), 1898-1935 (YDANGNRTTINSSASGKVQYEYGKLNQLVKETHEDGTV), and 2082-2113 (YNAHGDVIAISDSSGKTLAKYQYDAWGNPTKT). Composition is skewed to basic residues over residues 2251-2260 (KKDHGPKSKA) and 2269-2281 (SKFRSAKTLRRTT). Residues 2251 to 2285 (KKDHGPKSKARMPNGQPKSKFRSAKTLRRTTKATA) are disordered.

It belongs to the RHS/WapA nuclease family.

It localises to the secreted. It is found in the cell wall. Toxic component of a toxin-immunity protein module, which functions as a cellular contact-dependent growth inhibition (CDI) system. A site-specific tRNA3(Ser) nuclease, the C-terminus (residues 2201-2335) probably removes 2 or 4 nucleotides from the 3' end of tRNA3(Ser) but not tRNA2(Arg) or tRNA(Glu) (upon expression in E.coli), possibly endonucleolytically. The nuclease activity is neutralized by expression of the cognate immunity protein WapI from the same strain, but not its homolog from 2 other B.subtilis strains. The C-terminus cannot be expressed on its own in E.coli, however it can be cloned in the presence of its cognate immunity protein gene wapI. Cell contact is probably necessary for growth inhibition. The protein is tRNA3(Ser)-specific nuclease WapA (wapA) of Bacillus spizizenii (strain DSM 15029 / JCM 12233 / NBRC 101239 / NRRL B-23049 / TU-B-10) (Bacillus subtilis subsp. spizizenii).